A 1049-amino-acid chain; its full sequence is Solvent-resistant pump membrane transporter SrpB (1049 aa).

A run of 12 helical transmembrane segments spans residues 10–30 (IFAWVLAIVAMLAGALSLAKM), 339–359 (SVVHTIFEAVVLVFLVMYLFL), 366–386 (LIPTLAVPVVLLATFALLPYF), 392–412 (VLTMYAMVLAIGLLVDDAIVV), 440–460 (GALVGIGMVLSAVFVPMAFFG), 470–490 (FAITIVVCMGLSILVALVFTP), 542–562 (LAFLLITGGTGYLFTQIPKAF), 871–891 (APLLYALTVLIVFLCLAALYE), 895–915 (VPVSVIMVVPLGILGAVLATL), 927–947 (VGLMTTVGLSAKNAILIVEFA), 973–993 (ILMTSLAFTFGVLPMAIASGA), and 1008–1028 (GMITATVLAVFFVPLFYVVVV).

It belongs to the resistance-nodulation-cell division (RND) (TC 2.A.6) family.

It is found in the cell inner membrane. Functionally, the inner membrane transporter component of an organic solvent efflux pump. Involved in export of a number of low log POW compounds including hexane (log POW 3.5), toluene (log POW 2.5) and dimethylphthalate (log POW 2.3). The solvent resistance phenotype has been postulated to depend on the operon expression level. The polypeptide is Solvent-resistant pump membrane transporter SrpB (srpB) (Pseudomonas putida (Arthrobacter siderocapsulatus)).